Consider the following 190-residue polypeptide: Translation initiation factor IF-3 (190 aa).

Belongs to the IF-3 family. In terms of assembly, monomer.

The protein resides in the cytoplasm. Functionally, IF-3 binds to the 30S ribosomal subunit and shifts the equilibrium between 70S ribosomes and their 50S and 30S subunits in favor of the free subunits, thus enhancing the availability of 30S subunits on which protein synthesis initiation begins. This chain is Translation initiation factor IF-3, found in Prochlorococcus marinus (strain MIT 9312).